The following is a 101-amino-acid chain: Large ribosomal subunit protein uL23 (101 aa).

It belongs to the universal ribosomal protein uL23 family. Part of the 50S ribosomal subunit. Contacts protein L29, and trigger factor when it is bound to the ribosome.

Functionally, one of the early assembly proteins it binds 23S rRNA. One of the proteins that surrounds the polypeptide exit tunnel on the outside of the ribosome. Forms the main docking site for trigger factor binding to the ribosome. This Paenarthrobacter aurescens (strain TC1) protein is Large ribosomal subunit protein uL23.